Consider the following 233-residue polypeptide: Small ribosomal subunit protein uS3 (233 aa).

In terms of domain architecture, KH type-2 spans 39–107; sequence VRQFLTKELS…PAQINTYEIR (69 aa).

This sequence belongs to the universal ribosomal protein uS3 family. In terms of assembly, part of the 30S ribosomal subunit. Forms a tight complex with proteins S10 and S14.

Its function is as follows. Binds the lower part of the 30S subunit head. Binds mRNA in the 70S ribosome, positioning it for translation. In Hamiltonella defensa subsp. Acyrthosiphon pisum (strain 5AT), this protein is Small ribosomal subunit protein uS3.